Reading from the N-terminus, the 291-residue chain is D-alanyl-D-alanine carboxypeptidase (291 aa).

The signal sequence occupies residues 1–29; the sequence is MRLRRAAATVITTGALLAAGTLGATPATA. Ser64 (acyl-ester intermediate) is an active-site residue. The active-site Proton acceptor is the Lys67. Ser125 is a catalytic residue. Lys242 provides a ligand contact to substrate.

Belongs to the peptidase S11 family.

Its subcellular location is the secreted. It catalyses the reaction Preferential cleavage: (Ac)2-L-Lys-D-Ala-|-D-Ala. Also transpeptidation of peptidyl-alanyl moieties that are N-acyl substituents of D-alanine.. The protein operates within cell wall biogenesis; peptidoglycan biosynthesis. Removes C-terminal D-alanyl residues from sugar-peptide cell wall precursors. The sequence is that of D-alanyl-D-alanine carboxypeptidase from Streptomyces sp. (strain K15).